The following is a 68-amino-acid chain: uncharacterized protein (68 aa).

The first 21 residues, 1–21, serve as a signal peptide directing secretion; the sequence is MELYREYPAWLIFLRRTYAVA.

This is an uncharacterized protein from Escherichia coli O157:H7.